The chain runs to 446 residues: Tubulin beta-1 chain (446 aa).

The short motif at 1–4 (MREI) is the MREI motif element. GTP-binding residues include Q11, E69, S138, G142, T143, G144, N204, and N226. Mg(2+) is bound at residue E69. Positions 426–446 (QDATAEEEGEFEEEGEYEDGA) are disordered. Over residues 429-446 (TAEEEGEFEEEGEYEDGA) the composition is skewed to acidic residues. E438 carries the 5-glutamyl polyglutamate modification.

Belongs to the tubulin family. In terms of assembly, dimer of alpha and beta chains. A typical microtubule is a hollow water-filled tube with an outer diameter of 25 nm and an inner diameter of 15 nM. Alpha-beta heterodimers associate head-to-tail to form protofilaments running lengthwise along the microtubule wall with the beta-tubulin subunit facing the microtubule plus end conferring a structural polarity. Microtubules usually have 13 protofilaments but different protofilament numbers can be found in some organisms and specialized cells. Mg(2+) serves as cofactor. In terms of processing, some glutamate residues at the C-terminus are polyglycylated, resulting in polyglycine chains on the gamma-carboxyl group. Glycylation is mainly limited to tubulin incorporated into axonemes (cilia and flagella) whereas glutamylation is prevalent in neuronal cells, centrioles, axonemes, and the mitotic spindle. Both modifications can coexist on the same protein on adjacent residues, and lowering polyglycylation levels increases polyglutamylation, and reciprocally. The precise function of polyglycylation is still unclear. Some glutamate residues at the C-terminus are polyglutamylated, resulting in polyglutamate chains on the gamma-carboxyl group. Polyglutamylation plays a key role in microtubule severing by spastin (SPAST). SPAST preferentially recognizes and acts on microtubules decorated with short polyglutamate tails: severing activity by SPAST increases as the number of glutamates per tubulin rises from one to eight, but decreases beyond this glutamylation threshold. Brain.

It is found in the cytoplasm. It localises to the cytoskeleton. Its function is as follows. Tubulin is the major constituent of microtubules, a cylinder consisting of laterally associated linear protofilaments composed of alpha- and beta-tubulin heterodimers. Microtubules grow by the addition of GTP-tubulin dimers to the microtubule end, where a stabilizing cap forms. Below the cap, tubulin dimers are in GDP-bound state, owing to GTPase activity of alpha-tubulin. This is Tubulin beta-1 chain (tubb1) from Notothenia neglecta (Yellowbelly rockcod).